We begin with the raw amino-acid sequence, 390 residues long: Acetate kinase (390 aa).

Residue asparagine 10 participates in Mg(2+) binding. Lysine 17 serves as a coordination point for ATP. Substrate is bound at residue arginine 89. The Proton donor/acceptor role is filled by aspartate 146. ATP-binding positions include 204–208, 278–280, and 323–327; these read HLGNG, DMR, and GIGEN. Glutamate 376 provides a ligand contact to Mg(2+).

It belongs to the acetokinase family. As to quaternary structure, homodimer. Requires Mg(2+) as cofactor. Mn(2+) serves as cofactor.

It localises to the cytoplasm. The catalysed reaction is acetate + ATP = acetyl phosphate + ADP. It participates in metabolic intermediate biosynthesis; acetyl-CoA biosynthesis; acetyl-CoA from acetate: step 1/2. Catalyzes the formation of acetyl phosphate from acetate and ATP. Can also catalyze the reverse reaction. This Mycoplasma pneumoniae (strain ATCC 29342 / M129 / Subtype 1) (Mycoplasmoides pneumoniae) protein is Acetate kinase.